We begin with the raw amino-acid sequence, 203 residues long: Somatotropin (203 aa).

Residues 1-17 form the signal peptide; the sequence is MDRVVLMLSVLSLGVSS. The residue at position 18 (Gln18) is a Pyrrolidone carboxylic acid. His36 contacts Zn(2+). Residues Cys68 and Cys176 are joined by a disulfide bond. Residue Glu185 participates in Zn(2+) binding. Cys193 and Cys201 are oxidised to a cystine.

Belongs to the somatotropin/prolactin family.

The protein localises to the secreted. Growth hormone plays an important role in growth control and is involved in the regulation of several anabolic processes. Implicated as an osmoregulatory substance important for seawater adaptation. This chain is Somatotropin (gh), found in Pagrus major (Red sea bream).